A 537-amino-acid chain; its full sequence is uncharacterized protein (537 aa).

This is an uncharacterized protein from Mycobacterium bovis (strain ATCC BAA-935 / AF2122/97).